Consider the following 379-residue polypeptide: Early boundary activity protein 3 (379 aa).

In terms of assembly, the heterotrimeric Elba complex consists of Elba1, Elba2 and Elba3.

Its subcellular location is the nucleus. In terms of biological role, the heterotrimeric Elba complex is required for chromatin domain boundary function during early embryogenesis. It binds to a 8-bp sequence 5'-CCAATAAG-3' in the Fab-7 insulator or boundary element in the bithorax complex and contributes to its insulator or boundary activity. Elba3 lacks DNA-binding activity and plays the role of an adapter protein, bringing Elba1 and 2 together, thereby establishing a complex that recognizes the asymmetric sequence motif through the BEN domains of Elba1 and 2. This Drosophila melanogaster (Fruit fly) protein is Early boundary activity protein 3.